The primary structure comprises 299 residues: MKPDAHQVKQFLLNLQDTICQQLTAVDGAEFVEDSWQREGGGGGRSRVLRNGGVFEQAGVNFSHVHGEAMPASATAHRPELAGRSFEAMGVSLVVHPHNPYVPTSHANVRFFIAEKPGAEPVWWFGGGFDLTPFYGFEEDAIHWHRTARDLCLPFGKDVYPRYKKWCDDYFYLKHRNEQRGIGGLFFDDLNTPDFDHCFAFMQAVGKGYTDAYLPIVERRKAMAYGERERNFQLYRRGRYVEFNLVWDRGTLFGLQTGGRTESILMSMPPLVRWEYDYQPKDGSPEAALSEFIKVRDWV.

A substrate-binding site is contributed by S92. Mn(2+) is bound by residues H96 and H106. H106 (proton donor) is an active-site residue. N108–R110 lines the substrate pocket. Residues H145 and H175 each coordinate Mn(2+). The segment at Y240 to E275 is important for dimerization. Residue G258–R260 coordinates substrate.

Belongs to the aerobic coproporphyrinogen-III oxidase family. As to quaternary structure, homodimer. It depends on Mn(2+) as a cofactor.

It localises to the cytoplasm. It carries out the reaction coproporphyrinogen III + O2 + 2 H(+) = protoporphyrinogen IX + 2 CO2 + 2 H2O. It participates in porphyrin-containing compound metabolism; protoporphyrin-IX biosynthesis; protoporphyrinogen-IX from coproporphyrinogen-III (O2 route): step 1/1. In terms of biological role, involved in the heme biosynthesis. Catalyzes the aerobic oxidative decarboxylation of propionate groups of rings A and B of coproporphyrinogen-III to yield the vinyl groups in protoporphyrinogen-IX. This is Oxygen-dependent coproporphyrinogen-III oxidase from Escherichia coli O157:H7.